The sequence spans 60 residues: Large ribosomal subunit protein eL37 (60 aa).

4 residues coordinate Zn(2+): C19, C22, C34, and C37. The C4-type zinc finger occupies 19-37 (CRRCGRMSYHKRHKICSSC).

It belongs to the eukaryotic ribosomal protein eL37 family. Requires Zn(2+) as cofactor.

Its function is as follows. Binds to the 23S rRNA. The polypeptide is Large ribosomal subunit protein eL37 (Methanospirillum hungatei JF-1 (strain ATCC 27890 / DSM 864 / NBRC 100397 / JF-1)).